We begin with the raw amino-acid sequence, 48 residues long: Small, acid-soluble spore protein P (48 aa).

Residues 1–12 (MTNKNDSKDMRK) are compositionally biased toward basic and acidic residues. The interval 1–48 (MTNKNDSKDMRKNVSKGDNPGQPEPLDGSKKVKNRNHTRQKHNTSHDM) is disordered. Residues 31–48 (KVKNRNHTRQKHNTSHDM) show a composition bias toward basic residues.

It belongs to the SspP family.

Its subcellular location is the spore core. The protein is Small, acid-soluble spore protein P of Geobacillus thermodenitrificans (strain NG80-2).